The sequence spans 376 residues: Queuine tRNA-ribosyltransferase accessory subunit 2 (376 aa).

Zn(2+) is bound by residues Cys-323, Cys-325, Cys-328, and His-354.

Belongs to the queuine tRNA-ribosyltransferase family. QTRT2 subfamily. Heterodimer of a catalytic subunit and an accessory subunit. The cofactor is Zn(2+).

The protein resides in the cytoplasm. Functionally, non-catalytic subunit of the queuine tRNA-ribosyltransferase (TGT) that catalyzes the base-exchange of a guanine (G) residue with queuine (Q) at position 34 (anticodon wobble position) in tRNAs with GU(N) anticodons (tRNA-Asp, -Asn, -His and -Tyr), resulting in the hypermodified nucleoside queuosine (7-(((4,5-cis-dihydroxy-2-cyclopenten-1-yl)amino)methyl)-7-deazaguanosine). In Caenorhabditis briggsae, this protein is Queuine tRNA-ribosyltransferase accessory subunit 2.